The following is a 173-amino-acid chain: Alpha-crystallin A chain (173 aa).

At Met-1 the chain carries N-acetylmethionine. Positions 1–63 (MDIAIQHPWF…RSVLDSGISE (63 aa)) are required for complex formation with BFSP1 and BFSP2. Residue Gln-6 is modified to Deamidated glutamine; partial. Ser-45 carries the post-translational modification Phosphoserine. Gln-50 carries the deamidated glutamine; partial modification. Positions 52-162 (VFRSVLDSGI…GHSERAIPVS (111 aa)) constitute a sHSP domain. An N6-acetyllysine mark is found at Lys-70 and Lys-99. His-100 is a binding site for Zn(2+). Asn-101 is subject to Deamidated asparagine; partial. Zn(2+) is bound by residues Glu-102 and His-107. Phosphoserine is present on Ser-122. Asn-123 carries the post-translational modification Deamidated asparagine; partial. The tract at residues 144 to 173 (PKVPSGVDAGHSERAIPVSREEKPSSAPSS) is disordered. Positions 153–167 (GHSERAIPVSREEKP) are enriched in basic and acidic residues. His-154 contacts Zn(2+). An O-linked (GlcNAc) serine glycan is attached at Ser-162.

Belongs to the small heat shock protein (HSP20) family. As to quaternary structure, heteromer composed of three CRYAA and one CRYAB subunits. Inter-subunit bridging via zinc ions enhances stability, which is crucial as there is no protein turn over in the lens. Can also form homodimers and homotetramers (dimers of dimers) which serve as the building blocks of homooligomers. Within homooligomers, the zinc-binding motif is created from residues of 3 different molecules. His-100 and Glu-102 from one molecule are ligands of the zinc ion, and His-107 and His-154 residues from additional molecules complete the site with tetrahedral coordination geometry. Part of a complex required for lens intermediate filament formation composed of BFSP1, BFSP2 and CRYAA. In terms of processing, acetylation at Lys-70 may increase chaperone activity. Undergoes age-dependent proteolytical cleavage at the C-terminus.

Its subcellular location is the cytoplasm. The protein resides in the nucleus. In terms of biological role, contributes to the transparency and refractive index of the lens. Acts as a chaperone, preventing aggregation of various proteins under a wide range of stress conditions. Required for the correct formation of lens intermediate filaments as part of a complex composed of BFSP1, BFSP2 and CRYAA. This is Alpha-crystallin A chain (CRYAA) from Halichoerus grypus (Gray seal).